We begin with the raw amino-acid sequence, 117 residues long: Non-specific lipid-transfer protein (117 aa).

Positions 1–26 are cleaved as a signal peptide; the sequence is MASSAVIKLACAVLLCIVVAAPYAEA. 4 cysteine pairs are disulfide-bonded: Cys-30/Cys-76, Cys-40/Cys-53, Cys-54/Cys-99, and Cys-74/Cys-113.

This sequence belongs to the plant LTP family.

Its function is as follows. Plant non-specific lipid-transfer proteins transfer phospholipids as well as galactolipids across membranes. May play a role in wax or cutin deposition in the cell walls of expanding epidermal cells and certain secretory tissues. This chain is Non-specific lipid-transfer protein, found in Spinacia oleracea (Spinach).